A 202-amino-acid chain; its full sequence is MQILLATVAAYLIGSVSFAVVVSAAMGLADPRSYGSKNPGATNVLRGGNKKAAILTLVGDAFKGWLAVWLVKHFGIGGEIGVALAAIAVFLGHLYPVFFRFQGGKGVATAAGVLLAVHPALGLATALTWLIIAFFFRYSSLAALVAAVFAPVFDVFLFGTRNNPVAWAVIAMSALLIWRHRSNISKLLAGEESRIGQKKTDA.

5 consecutive transmembrane segments (helical) span residues 3–23 (ILLA…VVVS), 51–71 (KAAI…VWLV), 74–94 (FGIG…LGHL), 116–136 (AVHP…AFFF), and 140–160 (SLAA…LFGT).

The protein belongs to the PlsY family. As to quaternary structure, probably interacts with PlsX.

It is found in the cell inner membrane. It catalyses the reaction an acyl phosphate + sn-glycerol 3-phosphate = a 1-acyl-sn-glycero-3-phosphate + phosphate. It functions in the pathway lipid metabolism; phospholipid metabolism. Functionally, catalyzes the transfer of an acyl group from acyl-phosphate (acyl-PO(4)) to glycerol-3-phosphate (G3P) to form lysophosphatidic acid (LPA). This enzyme utilizes acyl-phosphate as fatty acyl donor, but not acyl-CoA or acyl-ACP. The chain is Glycerol-3-phosphate acyltransferase from Burkholderia thailandensis (strain ATCC 700388 / DSM 13276 / CCUG 48851 / CIP 106301 / E264).